The chain runs to 623 residues: Kelch-like protein diablo (623 aa).

Positions 1 to 54 (MGDLPGSGSTAQPRDAAVTGTGGNSTAGGGSSVGSTAVDRPPSPARLSHTSEKH) are disordered. A Phosphothreonine modification is found at Thr19. Positions 20-32 (GTGGNSTAGGGSS) are enriched in gly residues. Residues 72 to 139 (CDVVLNVGGR…CYTAHIIVEE (68 aa)) form the BTB domain. The 103-residue stretch at 174–276 (CLGIRAFADT…SPKFLVGTVG (103 aa)) folds into the BACK domain. 6 Kelch repeats span residues 323-369 (VLFA…VLND), 371-417 (LYAV…VLDG), 418-464 (FLYA…VLGG), 466-511 (LYAI…VFNN), 513-558 (IYAV…VVNG), and 559-605 (QLYA…VMRA).

The protein operates within protein modification; protein ubiquitination. Its function is as follows. Probable substrate-specific adapter of an E3 ubiquitin-protein ligase complex which mediates the ubiquitination and subsequent proteasomal degradation of target proteins. May have a role in synapse differentiation and growth. This chain is Kelch-like protein diablo, found in Drosophila melanogaster (Fruit fly).